A 324-amino-acid polypeptide reads, in one-letter code: MAEVNIIYVTVFILKGITNRPELQAPCFGVFLVIYLVTVLGNLGLITLIKIDTRLHTPMYYFLSHLAFVDLCYSSAITPKMMVNFVVERNTIPFHACATQLGCFLTFMITECFLLASMAYDCYVAICSPLHYSTLMSRRVCIQLVAVPYIYSFLVALFHTVITFRLTYCGPNLINHFYCDDLPFLALSCSDTHMKEILIFAFAGFDMISSSSIVLTSYIFIIAAILRIRSTQGQHKAISTCGSHMVTVTIFYGTLIFMYLQPKSNHSLDTDKMASVFYTVVIPMLNPLIYSLRNKEVKDASKKALDKGCENLQILTFLKIRKLY.

Residues 1–25 lie on the Extracellular side of the membrane; it reads MAEVNIIYVTVFILKGITNRPELQA. Residues 26-46 traverse the membrane as a helical segment; that stretch reads PCFGVFLVIYLVTVLGNLGLI. The Cytoplasmic portion of the chain corresponds to 47–54; the sequence is TLIKIDTR. A helical membrane pass occupies residues 55–75; it reads LHTPMYYFLSHLAFVDLCYSS. The Extracellular portion of the chain corresponds to 76-99; that stretch reads AITPKMMVNFVVERNTIPFHACAT. C97 and C189 are joined by a disulfide. A helical transmembrane segment spans residues 100 to 120; sequence QLGCFLTFMITECFLLASMAY. The Cytoplasmic segment spans residues 121–139; sequence DCYVAICSPLHYSTLMSRR. A helical membrane pass occupies residues 140 to 160; it reads VCIQLVAVPYIYSFLVALFHT. Topologically, residues 161 to 196 are extracellular; it reads VITFRLTYCGPNLINHFYCDDLPFLALSCSDTHMKE. Residues 197–217 form a helical membrane-spanning segment; the sequence is ILIFAFAGFDMISSSSIVLTS. The Cytoplasmic portion of the chain corresponds to 218-237; it reads YIFIIAAILRIRSTQGQHKA. The helical transmembrane segment at 238-258 threads the bilayer; it reads ISTCGSHMVTVTIFYGTLIFM. Residues 259–271 are Extracellular-facing; the sequence is YLQPKSNHSLDTD. N-linked (GlcNAc...) asparagine glycosylation occurs at N265. A helical transmembrane segment spans residues 272–292; that stretch reads KMASVFYTVVIPMLNPLIYSL. The Cytoplasmic segment spans residues 293–324; sequence RNKEVKDASKKALDKGCENLQILTFLKIRKLY.

Belongs to the G-protein coupled receptor 1 family.

It is found in the cell membrane. In terms of biological role, odorant receptor. The protein is Olfactory receptor 8U3 of Homo sapiens (Human).